The primary structure comprises 204 residues: Outer-membrane lipoprotein LolB (204 aa).

An N-terminal signal peptide occupies residues 1–16; the sequence is MLRHLLVFSLIALLAG. Cys17 is lipidated: N-palmitoyl cysteine. Cys17 is lipidated: S-diacylglycerol cysteine.

It belongs to the LolB family. Monomer.

It localises to the cell outer membrane. Its function is as follows. Plays a critical role in the incorporation of lipoproteins in the outer membrane after they are released by the LolA protein. This is Outer-membrane lipoprotein LolB from Ectopseudomonas mendocina (strain ymp) (Pseudomonas mendocina).